Here is a 105-residue protein sequence, read N- to C-terminus: uncharacterized protein (105 aa).

Low complexity predominate over residues 31–47 (SVNLPSPSVKPSVTPSV). The tract at residues 31–80 (SVNLPSPSVKPSVTPSVKKPPHVIRSDYSKPREKPAKVAKKPTVKNDKKP) is disordered. The segment covering 54-66 (IRSDYSKPREKPA) has biased composition (basic and acidic residues).

This is an uncharacterized protein from Caenorhabditis elegans.